Consider the following 198-residue polypeptide: Syndecan-4 (198 aa).

A signal peptide spans 1-23; it reads MAPACLLAPLLLLLLGGFPLVPG. Residues 24–145 lie on the Extracellular side of the membrane; the sequence is ESIRETEVID…QGSNIFERTE (122 aa). Disordered stretches follow at residues 42 to 76 and 94 to 130; these read YFSGALPDDEDAGGSDDFELSGSGDLDDTEEPRPF and AQPGIRVPSEPKELEENEVIPKRAPSDVGDDMSNKVS. O-linked (Xyl...) (glycosaminoglycan) serine glycans are attached at residues Ser-44, Ser-62, and Ser-64. The segment covering 48–71 has biased composition (acidic residues); it reads PDDEDAGGSDDFELSGSGDLDDTE. The span at 102-118 shows a compositional bias: basic and acidic residues; sequence SEPKELEENEVIPKRAP. Residues 146-170 traverse the membrane as a helical segment; sequence VLAALIVGGVVGILFAVFLILLLVY. The Cytoplasmic portion of the chain corresponds to 171 to 198; sequence RMKKKDEGSYDLGKKPIYKKAPTNEFYA.

This sequence belongs to the syndecan proteoglycan family. Homodimer. Interacts with CDCP1 and SDCBP. Interacts (via its cytoplasmic domain) with GIPC (via its PDZ domain). Interacts (via its cytoplasmic domain) with NUDT16L1. Interacts with DNM2; this interaction is markedly enhanced at focal ahesion site upon induction of focal adhesions and stress-fiber formation. In terms of processing, shedding is enhanced by a number of factors such as heparanase, thrombin or EGF. Also by stress and wound healing. PMA-mediated shedding is inhibited by TIMP3. Post-translationally, O-glycosylated; contains both chondroitin sulfate and heparan sulfate. Ser-44, Ser-62 and Ser-64 can all be modified by either chondroitin sulfate or heparan sulfate, and the protein exists in forms that contain only chondroitin sulfate, only heparan sulfate and both chondroitin sulfate and heparan sulfate. In terms of tissue distribution, ubiquitous. Highest levels in liver, kidney and lung.

Its subcellular location is the membrane. The protein resides in the secreted. Its function is as follows. Cell surface proteoglycan which regulates exosome biogenesis in concert with SDCBP and PDCD6IP. This is Syndecan-4 from Mus musculus (Mouse).